Consider the following 217-residue polypeptide: MLSVLRKSFPNGVTHAHRVIRCKSNQDKCAKNALIILAPGAEEMEFTISADVLRRGKILVTVAGLHDCEPVKCSRSVVIVPDTSLEEAVTRGDYDVVVLPGGLAGNKALMNSSAVGDVLRCQESKGGLIAAICAAPTALAKHGIGKGKSITSHPDMKPQLKELYCYIDDKTVVQDGNIITSRGPGTTFDFALKITEQLVGAEVAKEVAKAMLWTYKP.

The Nucleophile role is filled by cysteine 133. The residue at position 133 (cysteine 133) is a Cysteine sulfinic acid (-SO2H); alternate.

In terms of tissue distribution, expressed in testis (at protein level).

The protein resides in the cytoplasm. Its subcellular location is the nucleus. The protein localises to the mitochondrion. Functionally, plays an important role in cell protection against oxidative stress and cell death acting as oxidative stress sensor. Does not play a role in methylglyoxal detoxification. The chain is Protein DJ-1alpha from Drosophila melanogaster (Fruit fly).